A 168-amino-acid polypeptide reads, in one-letter code: I-Kappa-B like protein G2 (168 aa).

ANK repeat units lie at residues S56 to G88 and G93 to A123.

This sequence belongs to the polydnaviridae I-Kappa-B-like protein family.

Functionally, suppresses the host immune response through NF-kappa-B inactivation. Possesses ankyrin repeat domains required for NF-kappa-B binding but lacks the regulatory regions required for dissociation from NF-kappa-B and degradation. Therefore, prevents host NF-kappa-B release and subsequent activation. The protein is I-Kappa-B like protein G2 (G4) of Microplitis demolitor (Parasitoid wasp).